The chain runs to 283 residues: Peflin (283 aa).

A run of 8 repeats spans residues 21-30 (PQTNYYGGQQ), 36-44 (QPAASYGRP), 45-54 (APGAPYGSPP), 55-62 (SGGVYGHP), 71-79 (APGGPYGGQ), 80-87 (APGGPYSV), 88-95 (PGSTPYGS), and 96-104 (QQHGSYGQG). The segment at 21–104 (PQTNYYGGQQ…SQQHGSYGQG (84 aa)) is 8 X 9 AA approximate tandem repeat of [AP]-P-G-G-P-Y-G-G-P-P. The span at 37–70 (PAASYGRPAPGAPYGSPPSGGVYGHPVPGSAAPG) shows a compositional bias: low complexity. The segment at 37–113 (PAASYGRPAP…GAPAGNIPPG (77 aa)) is disordered. The segment covering 71–81 (APGGPYGGQAP) has biased composition (gly residues). Residues 93–104 (YGSQQHGSYGQG) show a composition bias toward low complexity. EF-hand domains lie at 113–148 (GVDPEAFSWFQTVDTDHSGYISLKELKQALVNTNWS), 154–179 (TCTMMMNMFDKSNSGRIDMFGFSALW), 180–215 (RFIQQWRNLFQQYDRDRSGSINQGELHQALCQMGYQ), 216–252 (LSPQFVQIVMSRYAQRSAQPGLQLDRFIQICTQLQSM), and 253–282 (TEAFREKDTGQIGTAKLSYEDFITMTTTRL). Positions 126, 128, 130, 132, and 137 each coordinate Ca(2+). Positions 193, 195, 197, 199, and 204 each coordinate Ca(2+).

As to quaternary structure, heterodimer; heterodimerizes (via the EF-hand 5) with pdcd6.

The protein localises to the cytoplasm. Its subcellular location is the endoplasmic reticulum. It is found in the membrane. The protein resides in the cytoplasmic vesicle. It localises to the COPII-coated vesicle membrane. In terms of biological role, calcium-binding protein that acts as an adapter that bridges unrelated proteins or stabilizes weak protein-protein complexes in response to calcium. Acts as a negative regulator of ER-Golgi transport. This Xenopus laevis (African clawed frog) protein is Peflin.